The following is a 311-amino-acid chain: GTP cyclohydrolase FolE2 (311 aa).

It belongs to the GTP cyclohydrolase IV family.

The catalysed reaction is GTP + H2O = 7,8-dihydroneopterin 3'-triphosphate + formate + H(+). It functions in the pathway cofactor biosynthesis; 7,8-dihydroneopterin triphosphate biosynthesis; 7,8-dihydroneopterin triphosphate from GTP: step 1/1. Its function is as follows. Converts GTP to 7,8-dihydroneopterin triphosphate. This Xanthomonas campestris pv. campestris (strain 8004) protein is GTP cyclohydrolase FolE2.